Consider the following 160-residue polypeptide: MTKKKVHKPGSATIALNKRARHEYFIEEEFEAGLSLQGWEVKSLRAGKANISDSYVILIDGEAFLFGANFTPLAVASSHYVCDPIRTRKLLLNQRELESLFGRINREGYTVVALSLYWKNAWCKVKIGVAKGKKQHDKRSDLKDREWQVDKARIMKHAGR.

The protein belongs to the SmpB family.

Its subcellular location is the cytoplasm. Its function is as follows. Required for rescue of stalled ribosomes mediated by trans-translation. Binds to transfer-messenger RNA (tmRNA), required for stable association of tmRNA with ribosomes. tmRNA and SmpB together mimic tRNA shape, replacing the anticodon stem-loop with SmpB. tmRNA is encoded by the ssrA gene; the 2 termini fold to resemble tRNA(Ala) and it encodes a 'tag peptide', a short internal open reading frame. During trans-translation Ala-aminoacylated tmRNA acts like a tRNA, entering the A-site of stalled ribosomes, displacing the stalled mRNA. The ribosome then switches to translate the ORF on the tmRNA; the nascent peptide is terminated with the 'tag peptide' encoded by the tmRNA and targeted for degradation. The ribosome is freed to recommence translation, which seems to be the essential function of trans-translation. The chain is SsrA-binding protein from Enterobacter sp. (strain 638).